Reading from the N-terminus, the 372-residue chain is MRSIIADSKRLVVKVGSSLVTNDGRGLDHDAIGRWAAQIAALRNEGKEVVLVSSGAIAEGMQRLGWSRRPREIDELQAAAAVGQMGLAQVYESRFAEHGIRTAQILLTHADLADRERYLNARSTLLTLLRLGVVPIINENDTVVTDEIKFGDNDTLGALVANLIEGDALIILTDQQGLFTADPRKDPGATLVAEASAGAPELEAMAGGAGSSIGRGGMLTKILAAKRAAHSGANTVIASGRERDVLLRLASGEAIGTQLIARTARMAARKQWMADHLQVRGHVVIDAGAVDKLTAGGKSLLPIGVVAVQGVFARGEVIACVNDAGREVARGITNYSSAEAKLIQRKPSGEIEAVLGYMLEPELIHRDNLVLV.

Residue Lys14 participates in ATP binding. Ser54, Asp141, and Asn153 together coordinate substrate. 173-174 contacts ATP; it reads TD. One can recognise a PUA domain in the interval 280 to 358; it reads RGHVVIDAGA…GEIEAVLGYM (79 aa).

The protein belongs to the glutamate 5-kinase family.

Its subcellular location is the cytoplasm. The enzyme catalyses L-glutamate + ATP = L-glutamyl 5-phosphate + ADP. It participates in amino-acid biosynthesis; L-proline biosynthesis; L-glutamate 5-semialdehyde from L-glutamate: step 1/2. In terms of biological role, catalyzes the transfer of a phosphate group to glutamate to form L-glutamate 5-phosphate. This chain is Glutamate 5-kinase, found in Burkholderia thailandensis (strain ATCC 700388 / DSM 13276 / CCUG 48851 / CIP 106301 / E264).